Here is a 488-residue protein sequence, read N- to C-terminus: Palmitoyltransferase ZDHHC14 (488 aa).

The Cytoplasmic segment spans residues 1 to 60 (MPPGGGGPMKDCEYSQISTHSSSPMESPHKKKKIAARRKWEVFPGRNKFFCNGRIMMARQ). Residues 61 to 81 (TGVFYLTLVLILVTSGLFFAF) traverse the membrane as a helical segment. Residues 82-89 (DCPYLAVK) lie on the Lumenal side of the membrane. A helical membrane pass occupies residues 90-110 (ITPAIPAVAGILFFFVMGTLL). Residues 111 to 208 (RTSFSDPGVL…GNCVGKRNYR (98 aa)) are Cytoplasmic-facing. Residues 165-215 (KYCFTCKIFRPPRASHCSLCDNCVERFDHHCPWVGNCVGKRNYRFFYMFIL) enclose the DHHC domain. The active-site S-palmitoyl cysteine intermediate is Cys195. A helical transmembrane segment spans residues 209–229 (FFYMFILSLSFLTVFIFAFVI). Over 230 to 255 (THVILRSQQTGFLNALKDSPASVLEA) the chain is Lumenal. The chain crosses the membrane as a helical span at residues 256 to 276 (VVCFFSVWSIVGLSGFHTYLI). The Cytoplasmic segment spans residues 277-488 (SSNQTTNEDI…VRGLVKLSSV (212 aa)). The residue at position 455 (Ser455) is a Phosphoserine.

It belongs to the DHHC palmitoyltransferase family. ERF2/ZDHHC9 subfamily. Widely expressed.

It is found in the endoplasmic reticulum membrane. Its subcellular location is the golgi apparatus. It localises to the golgi stack membrane. It catalyses the reaction L-cysteinyl-[protein] + hexadecanoyl-CoA = S-hexadecanoyl-L-cysteinyl-[protein] + CoA. Its function is as follows. Palmitoyltransferase that could catalyze the addition of palmitate onto various protein substrates. May have a palmitoyltransferase activity toward the beta-2 adrenergic receptor/ADRB2 and thereby regulate G protein-coupled receptor signaling. May play a role in cell differentiation and apoptosis. The chain is Palmitoyltransferase ZDHHC14 from Homo sapiens (Human).